A 286-amino-acid chain; its full sequence is Elongation factor Ts (286 aa).

The segment at 82–85 (TDFV) is involved in Mg(2+) ion dislocation from EF-Tu.

Belongs to the EF-Ts family.

The protein resides in the cytoplasm. Associates with the EF-Tu.GDP complex and induces the exchange of GDP to GTP. It remains bound to the aminoacyl-tRNA.EF-Tu.GTP complex up to the GTP hydrolysis stage on the ribosome. The protein is Elongation factor Ts of Hamiltonella defensa subsp. Acyrthosiphon pisum (strain 5AT).